Reading from the N-terminus, the 1076-residue chain is Nucleoporin NUP1 (1076 aa).

The span at 1 to 11 (MSSNTSSVMSS) shows a compositional bias: low complexity. Residues 1 to 39 (MSSNTSSVMSSPRVEKRSFSSTLKSFFTNPNKKRPSSKK) form a disordered region. Residue S2 is modified to N-acetylserine. Polar residues predominate over residues 19–30 (FSSTLKSFFTNP). Residues S54 and S161 each carry the phosphoserine modification. Disordered regions lie at residues 143-183 (SQSK…TNVG) and 224-260 (KKDNKDKEGNAGGDQKTSENRNNIKSSISNGNLATGP). Composition is skewed to polar residues over residues 154–170 (LCTSSTPSPIKNGSCTR) and 243–260 (NRNNIKSSISNGNLATGP). The FXF 1 repeat unit spans residues 336–338 (FDF). T381 bears the Phosphothreonine mark. S383 is subject to Phosphoserine. The stretch at 384-386 (FNF) is one FXF 2 repeat. The interval 403-518 (TTLFNFGGKS…SFVFGASDKQ (116 aa)) is disordered. FXFG repeat units follow at residues 406–409 (FNFG) and 422–425 (FKFG). Positions 426 to 439 (KTSEKSENHTESDA) are enriched in basic and acidic residues. FXFG repeat units lie at residues 448 to 451 (FSFG) and 484 to 487 (FDFG). A compositionally biased stretch (basic and acidic residues) spans 488 to 505 (KTGDQKETKKGESEKDAS). 4 FXFG repeats span residues 510-513 (FVFG), 525-528 (FTFG), 543-546 (FTFG), and 571-574 (FTFG). The tract at residues 548-743 (AATAKETHTK…SMKSTASTAA (196 aa)) is disordered. FXF repeat units follow at residues 591–593 (FSF), 614–616 (FSF), 636–638 (FSF), and 657–659 (FTF). Composition is skewed to polar residues over residues 634–649 (PTFSFTEPAQKDSSVV) and 658–667 (TFASSKTSQP). The residue at position 637 (S637) is a Phosphoserine. An FXFG 9 repeat occupies 671-674 (FSFG). The FXF 7 repeat unit spans residues 689-691 (FSF). FXFG repeat units lie at residues 708-711 (FTFG) and 727-730 (FSFG). The segment covering 708-723 (FTFGGSTTNNTTTTST) has biased composition (low complexity). Residues 753–755 (FSF) form an FXF 8 repeat. The stretch at 800–803 (FSFG) is one FXFG 12 repeat. FXF repeat units lie at residues 819 to 821 (FSF) and 866 to 868 (FGF). One copy of the FXFG 13 repeat lies at 885–888 (FNFG). An FXF 11 repeat occupies 929–931 (FNF). The disordered stretch occupies residues 940–979 (GGSVFNMNGNTNANTVFAGSNNQPHQSQTPSFNTNSSFTP). The span at 944 to 964 (FNMNGNTNANTVFAGSNNQPH) shows a compositional bias: polar residues. Low complexity predominate over residues 965–979 (QSQTPSFNTNSSFTP). FG repeat units follow at residues 1008-1009 (FG), 1027-1028 (FG), and 1038-1039 (FG). Residues 1025–1054 (SIFGGAGGVPTTSFGQPQSAPNQMGMGTNN) are disordered. A compositionally biased stretch (polar residues) spans 1034-1045 (PTTSFGQPQSAP). Residues 1040 to 1076 (QPQSAPNQMGMGTNNGMSMGGGVMANRKIARMRHSKR) are interaction with KAP95.

In terms of assembly, component of the nuclear pore complex (NPC). NPC constitutes the exclusive means of nucleocytoplasmic transport. NPCs allow the passive diffusion of ions and small molecules and the active, nuclear transport receptor-mediated bidirectional transport of macromolecules such as proteins, RNAs, ribonucleoparticles (RNPs), and ribosomal subunits across the nuclear envelope. Due to its 8-fold rotational symmetry, all subunits are present with 8 copies or multiples thereof. Interacts through its FG repeats with nuclear transport receptors. Binds to the nuclear basket of the NPC through NUP60. Interacts with KAP122. Phosphorylated by CDC28.

Its subcellular location is the nucleus. It is found in the nuclear pore complex. The protein resides in the nucleus membrane. Functionally, functions as a component of the nuclear pore complex (NPC). NPC components, collectively referred to as nucleoporins (NUPs), can play the role of both NPC structural components and of docking or interaction partners for transiently associated nuclear transport factors. Active directional transport is assured by both, a Phe-Gly (FG) repeat affinity gradient for these transport factors across the NPC and a transport cofactor concentration gradient across the nuclear envelope (GSP1 and GSP2 GTPases associated predominantly with GTP in the nucleus, with GDP in the cytoplasm). As one of the FG repeat nucleoporins NUP1 is involved in interactions with and guidance of nuclear transport receptors such as SRP1-KAP95 (importin alpha and beta) through the NPC. Like the closely related NUP2 it also plays an important role in disassembling and recycling SRP1-KAP95 to the cytoplasm after nuclear import. Upon entry of the heterotrimeric SRP1-KAP95-cargo complex in the nucleus, NUP1 binds through its C-terminus to KAP95, thus accelerating the release of KAP95 and, indirectly, of the nuclear localization signal (NLS)-containing cargo from the SRP1-KAP95-cargo complex. The chain is Nucleoporin NUP1 (NUP1) from Saccharomyces cerevisiae (strain ATCC 204508 / S288c) (Baker's yeast).